We begin with the raw amino-acid sequence, 296 residues long: Bifunctional protein FolD 1/3 (296 aa).

Residues 166–168, Ser191, and Ile232 contribute to the NADP(+) site; that span reads GRS.

This sequence belongs to the tetrahydrofolate dehydrogenase/cyclohydrolase family. As to quaternary structure, homodimer.

The catalysed reaction is (6R)-5,10-methylene-5,6,7,8-tetrahydrofolate + NADP(+) = (6R)-5,10-methenyltetrahydrofolate + NADPH. It carries out the reaction (6R)-5,10-methenyltetrahydrofolate + H2O = (6R)-10-formyltetrahydrofolate + H(+). It functions in the pathway one-carbon metabolism; tetrahydrofolate interconversion. In terms of biological role, catalyzes the oxidation of 5,10-methylenetetrahydrofolate to 5,10-methenyltetrahydrofolate and then the hydrolysis of 5,10-methenyltetrahydrofolate to 10-formyltetrahydrofolate. The protein is Bifunctional protein FolD 1/3 of Ruegeria pomeroyi (strain ATCC 700808 / DSM 15171 / DSS-3) (Silicibacter pomeroyi).